A 191-amino-acid chain; its full sequence is 3-isopropylmalate dehydratase small subunit (191 aa).

The protein belongs to the LeuD family. LeuD type 1 subfamily. In terms of assembly, heterodimer of LeuC and LeuD.

It catalyses the reaction (2R,3S)-3-isopropylmalate = (2S)-2-isopropylmalate. It participates in amino-acid biosynthesis; L-leucine biosynthesis; L-leucine from 3-methyl-2-oxobutanoate: step 2/4. In terms of biological role, catalyzes the isomerization between 2-isopropylmalate and 3-isopropylmalate, via the formation of 2-isopropylmaleate. The polypeptide is 3-isopropylmalate dehydratase small subunit (Staphylococcus saprophyticus subsp. saprophyticus (strain ATCC 15305 / DSM 20229 / NCIMB 8711 / NCTC 7292 / S-41)).